The primary structure comprises 63 residues: Beta-defensin 38 (63 aa).

An N-terminal signal peptide occupies residues M1 to A21. 3 disulfides stabilise this stretch: C29-C58, C36-C51, and C41-C59.

The protein belongs to the beta-defensin family.

The protein localises to the secreted. In terms of biological role, has antibacterial activity. The protein is Beta-defensin 38 (Defb38) of Rattus norvegicus (Rat).